Reading from the N-terminus, the 509-residue chain is ATP synthase subunit alpha (509 aa).

Residue 169–176 (GDRQTGKT) participates in ATP binding.

It belongs to the ATPase alpha/beta chains family. In terms of assembly, F-type ATPases have 2 components, CF(1) - the catalytic core - and CF(0) - the membrane proton channel. CF(1) has five subunits: alpha(3), beta(3), gamma(1), delta(1), epsilon(1). CF(0) has three main subunits: a(1), b(2) and c(9-12). The alpha and beta chains form an alternating ring which encloses part of the gamma chain. CF(1) is attached to CF(0) by a central stalk formed by the gamma and epsilon chains, while a peripheral stalk is formed by the delta and b chains.

It localises to the cell inner membrane. It catalyses the reaction ATP + H2O + 4 H(+)(in) = ADP + phosphate + 5 H(+)(out). Functionally, produces ATP from ADP in the presence of a proton gradient across the membrane. The alpha chain is a regulatory subunit. The protein is ATP synthase subunit alpha of Brucella ovis (strain ATCC 25840 / 63/290 / NCTC 10512).